We begin with the raw amino-acid sequence, 252 residues long: Flap endonuclease Xni (252 aa).

Position 103 (D103) interacts with Mg(2+). Residues 159–248 (VLPEQLPDYW…LKGNLQQLRL (90 aa)) form the 5'-3' exonuclease domain. L170, A171, P179, I181, and I184 together coordinate K(+). The interaction with DNA stretch occupies residues 183-188 (GIGPKT).

It belongs to the Xni family. Mg(2+) serves as cofactor. Requires K(+) as cofactor.

Has flap endonuclease activity. During DNA replication, flap endonucleases cleave the 5'-overhanging flap structure that is generated by displacement synthesis when DNA polymerase encounters the 5'-end of a downstream Okazaki fragment. The chain is Flap endonuclease Xni from Photorhabdus laumondii subsp. laumondii (strain DSM 15139 / CIP 105565 / TT01) (Photorhabdus luminescens subsp. laumondii).